Consider the following 471-residue polypeptide: 3-isopropylmalate dehydratase large subunit (471 aa).

Residues Cys347, Cys407, and Cys410 each coordinate [4Fe-4S] cluster.

The protein belongs to the aconitase/IPM isomerase family. LeuC type 1 subfamily. In terms of assembly, heterodimer of LeuC and LeuD. The cofactor is [4Fe-4S] cluster.

The catalysed reaction is (2R,3S)-3-isopropylmalate = (2S)-2-isopropylmalate. Its pathway is amino-acid biosynthesis; L-leucine biosynthesis; L-leucine from 3-methyl-2-oxobutanoate: step 2/4. Its function is as follows. Catalyzes the isomerization between 2-isopropylmalate and 3-isopropylmalate, via the formation of 2-isopropylmaleate. The chain is 3-isopropylmalate dehydratase large subunit from Buchnera aphidicola subsp. Baizongia pistaciae (strain Bp).